A 254-amino-acid polypeptide reads, in one-letter code: Bidirectional sugar transporter SWEET6b (254 aa).

The Extracellular portion of the chain corresponds to 1-9; sequence MISPDAARN. The helical transmembrane segment at 10–30 threads the bilayer; sequence VVGIIGNVISFGLFLAPVPTF. A MtN3/slv 1 domain is found at 10 to 98; it reads VVGIIGNVIS…IFFLYSPNKK (89 aa). The Cytoplasmic segment spans residues 31 to 45; that stretch reads WRICKRKDVEEFKAD. A helical transmembrane segment spans residues 46–66; it reads PYLATLLNCMLWVFYGIPIVH. The Extracellular segment spans residues 67 to 69; it reads PNS. Residues 70 to 90 form a helical membrane-spanning segment; the sequence is ILVVTINGIGLVVEGTYLFIF. The Cytoplasmic portion of the chain corresponds to 91–101; sequence FLYSPNKKRLR. The helical transmembrane segment at 102 to 122 threads the bilayer; the sequence is MLAVLGVELVFMLAVILGVLL. Residues 123–131 are Extracellular-facing; it reads GAHTHKKRS. A helical transmembrane segment spans residues 132–152; it reads MIVGILCVFFGSIMYFSPLTI. Residues 133 to 216 enclose the MtN3/slv 2 domain; it reads IVGILCVFFG…LILYACYYRT (84 aa). Topologically, residues 153–165 are cytoplasmic; sequence MGKVIKTKSVEYM. The chain crosses the membrane as a helical span at residues 166-186; it reads PFFLSLVCFLNGVCWTAYALI. At 187–189 the chain is on the extracellular side; the sequence is RFD. Residues 190 to 210 form a helical membrane-spanning segment; sequence IYVTIPNSLGAIFGAIQLILY. The Cytoplasmic portion of the chain corresponds to 211-254; it reads ACYYRTTPKKTKAAKDVEMPSVISGPGAAATASGGSVVSVTVER.

It belongs to the SWEET sugar transporter family. As to quaternary structure, forms homooligomers and/or heterooligomers.

Its subcellular location is the cell membrane. Mediates both low-affinity uptake and efflux of sugar across the plasma membrane. This Oryza sativa subsp. indica (Rice) protein is Bidirectional sugar transporter SWEET6b (SWEET6B).